Reading from the N-terminus, the 364-residue chain is Aminomethyltransferase (364 aa).

It belongs to the GcvT family. As to quaternary structure, the glycine cleavage system is composed of four proteins: P, T, L and H.

The catalysed reaction is N(6)-[(R)-S(8)-aminomethyldihydrolipoyl]-L-lysyl-[protein] + (6S)-5,6,7,8-tetrahydrofolate = N(6)-[(R)-dihydrolipoyl]-L-lysyl-[protein] + (6R)-5,10-methylene-5,6,7,8-tetrahydrofolate + NH4(+). The glycine cleavage system catalyzes the degradation of glycine. This is Aminomethyltransferase from Escherichia coli (strain 55989 / EAEC).